We begin with the raw amino-acid sequence, 188 residues long: F-box only protein 36 (188 aa).

Residues 91–137 (FDYLERLSDRLLLKIICYLDLEDIASLSQTSSKFEKLCKSDLLWEQI) enclose the F-box domain.

Directly interacts with SKP1 and CUL1.

Substrate-recognition component of the SCF (SKP1-CUL1-F-box protein)-type E3 ubiquitin ligase complex. This is F-box only protein 36 (Fbxo36) from Mus musculus (Mouse).